A 141-amino-acid chain; its full sequence is Putative ankyrin repeat protein FPV223 (141 aa).

ANK repeat units lie at residues Ser21 to Lys50, Cys54 to Lys83, Arg85 to Ser114, and Asp118 to Ile140.

The chain is Putative ankyrin repeat protein FPV223 from Vertebrata (FPV).